The chain runs to 82 residues: Small ribosomal subunit protein uS17 (82 aa).

Belongs to the universal ribosomal protein uS17 family. Part of the 30S ribosomal subunit.

Its function is as follows. One of the primary rRNA binding proteins, it binds specifically to the 5'-end of 16S ribosomal RNA. This chain is Small ribosomal subunit protein uS17, found in Shewanella sediminis (strain HAW-EB3).